The sequence spans 270 residues: Undecaprenyl-diphosphatase 1 (270 aa).

6 helical membrane passes run 79–99, 105–125, 155–175, 182–202, 215–235, and 242–262; these read NLLL…LLFS, VLFN…IILW, LALI…LFLG, TEFS…YSLI, VFAV…RALL, and SFAV…GTWW.

The protein belongs to the UppP family.

It localises to the cell inner membrane. The enzyme catalyses di-trans,octa-cis-undecaprenyl diphosphate + H2O = di-trans,octa-cis-undecaprenyl phosphate + phosphate + H(+). Functionally, catalyzes the dephosphorylation of undecaprenyl diphosphate (UPP). Confers resistance to bacitracin. The protein is Undecaprenyl-diphosphatase 1 of Chromobacterium violaceum (strain ATCC 12472 / DSM 30191 / JCM 1249 / CCUG 213 / NBRC 12614 / NCIMB 9131 / NCTC 9757 / MK).